Consider the following 206-residue polypeptide: Adenylate kinase (206 aa).

ATP is bound at residue 10–15 (GAGKGT). Positions 30–59 (STGDILREAVQKGTPLGKKAKEYMERGELV) are NMP. Residues Thr31, 57 to 59 (ELV), 82 to 85 (GFPR), and Gln89 contribute to the AMP site. Residues Arg120, Arg124, and 133–134 (VY) contribute to the ATP site. An LID region spans residues 123–153 (GRRINPETGEVYHVKYNPPPPGVKVIQREDD). Arg161 contacts AMP. Lys189 lines the ATP pocket.

Belongs to the adenylate kinase family. As to quaternary structure, monomer.

Its subcellular location is the cytoplasm. The catalysed reaction is AMP + ATP = 2 ADP. It participates in purine metabolism; AMP biosynthesis via salvage pathway; AMP from ADP: step 1/1. Its function is as follows. Catalyzes the reversible transfer of the terminal phosphate group between ATP and AMP. Plays an important role in cellular energy homeostasis and in adenine nucleotide metabolism. The polypeptide is Adenylate kinase (Aquifex aeolicus (strain VF5)).